The primary structure comprises 315 residues: DNA-directed RNA polymerase subunit alpha (315 aa).

Residues 1–228 (MAQFQIECVE…DLFNPLKDIS (228 aa)) are alpha N-terminal domain (alpha-NTD). Residues 243–315 (TAQIPIEELQ…LPQERSSKHN (73 aa)) are alpha C-terminal domain (alpha-CTD).

The protein belongs to the RNA polymerase alpha chain family. In terms of assembly, homodimer. In cyanobacteria the RNAP catalytic core is composed of 2 alpha, 1 beta, 1 beta', 1 gamma and 1 omega subunit. When a sigma factor is associated with the core the holoenzyme is formed, which can initiate transcription.

The catalysed reaction is RNA(n) + a ribonucleoside 5'-triphosphate = RNA(n+1) + diphosphate. In terms of biological role, DNA-dependent RNA polymerase catalyzes the transcription of DNA into RNA using the four ribonucleoside triphosphates as substrates. The polypeptide is DNA-directed RNA polymerase subunit alpha (Nostoc sp. (strain PCC 7120 / SAG 25.82 / UTEX 2576)).